The following is a 478-amino-acid chain: MAARPITLGIDLGTTSVKAALLRAAPDDPSGFAVLASCARAARAEAAVESAVAGPQGREQDVSRILQALHECLAALPRPQLRSVVGIGVSGQMHGVVFWKTGQGCEWTEGGITPVFEPRAVSHLVTWQDGRCSSEFLASLPQPKSHLSVATGFGCATIFWLLKYRPEFLKSYDAAGTIHDYVVAMLCGLPRPLMSDQNAASWGYFNTQSQSWNVETLRSSGFPVHLLPDIAEPGSVAGRTSHMWFEIPKGTQVGVALGDLQASVYSCMAQRTDAVLNISTSVQLAASMPSGFQPAQTPDPTAPVAYFPYFNRTYLGVAASLNGGNVLATFVHMLVQWMADLGLEVEESTVYSRMIQAAVQQRDTHLTITPTVLGERHLPDQLASVTRISSSDLSLGHVTRALCRGIVQNLHSMLPIQQLQEWGVERVMGSGSALSRNDVLKQEVQRAFPLPMSFGQDVDAAVGAALVMLRRHLNQKES.

It belongs to the FGGY kinase family. As to expression, strongly expressed in liver, kidney and pancreas. Expressed at lower levels in placenta and heart. Very weakly expressed in lung and brain.

The protein resides in the cytoplasm. The catalysed reaction is sedoheptulose + ATP = D-sedoheptulose 7-phosphate + ADP + H(+). Its function is as follows. Acts as a modulator of macrophage activation through control of glucose metabolism. The polypeptide is Sedoheptulokinase (Homo sapiens (Human)).